Reading from the N-terminus, the 231-residue chain is Ion-translocating oxidoreductase complex subunit E (231 aa).

Helical transmembrane passes span Ala18–Ala38, Leu39–Leu59, Thr63–Val83, Leu86–Val106, Ala125–Leu145, and Pro182–Gly202.

This sequence belongs to the NqrDE/RnfAE family. In terms of assembly, the complex is composed of six subunits: RsxA, RsxB, RsxC, RsxD, RsxE and RsxG.

Its subcellular location is the cell inner membrane. Part of a membrane-bound complex that couples electron transfer with translocation of ions across the membrane. Required to maintain the reduced state of SoxR. This chain is Ion-translocating oxidoreductase complex subunit E, found in Escherichia coli O127:H6 (strain E2348/69 / EPEC).